The following is a 203-amino-acid chain: Small ribosomal subunit protein uS4 (203 aa).

The region spanning 93–173 (RRFDNVVFRA…IPSWIQVDKA (81 aa)) is the S4 RNA-binding domain.

It belongs to the universal ribosomal protein uS4 family. As to quaternary structure, part of the 30S ribosomal subunit. Contacts protein S5. The interaction surface between S4 and S5 is involved in control of translational fidelity.

One of the primary rRNA binding proteins, it binds directly to 16S rRNA where it nucleates assembly of the body of the 30S subunit. Functionally, with S5 and S12 plays an important role in translational accuracy. This is Small ribosomal subunit protein uS4 from Pelodictyon phaeoclathratiforme (strain DSM 5477 / BU-1).